The chain runs to 109 residues: Synaptobrevin-1 (109 aa).

Positions 1–26 are disordered; that stretch reads MDAQGDAGAQGGSQGGPRPSNKRLQQ. The Cytoplasmic segment spans residues 1 to 86; sequence MDAQGDAGAQ…KRKYWWKNIK (86 aa). The v-SNARE coiled-coil homology domain maps to 23–83; that stretch reads RLQQTQAQVD…ATLKRKYWWK (61 aa). The chain crosses the membrane as a helical; Anchor for type IV membrane protein span at residues 87–107; the sequence is MMIIMCAIVVILIIIIVLWAG. Residues 108–109 lie on the Extracellular side of the membrane; that stretch reads GK.

This sequence belongs to the synaptobrevin family. Part of the SNARE core complex containing ric-4/SNAP25, snb-1/VAMP2 and unc-64/STX1A. This complex binds to cpx-1/CPLX1. In terms of tissue distribution, expressed in the nervous system notably the nerve ring, ventral cord and dorsal cord.

It localises to the cytoplasmic vesicle. Its subcellular location is the secretory vesicle. The protein resides in the synaptic vesicle membrane. The protein localises to the cell membrane. It is found in the synapse. It localises to the synaptosome. Involved in the targeting and/or fusion of transport vesicles to their target membrane. Acts in neuronal exocytosis of synaptic transmission. Likely to have a role in cholinergic transmisson. Required for viability, coordinated movement and M3 pharynx motor neuron function. This chain is Synaptobrevin-1, found in Caenorhabditis elegans.